Reading from the N-terminus, the 274-residue chain is MAVVKVKPTSPGRRAVVKVVHSHLHKGKPEASLLEPQIQNAGRNNNGHITIRHKGGGHKHHYRVVDFKRNKDGIPAKVERIEYDPNRTAHIALVCYADGERRYIIAPRGLEVGATILSGSEAPIKAGNTLPIRNIPVGSTMHCVELLAGKGAQIARSAGTSVTLLARESTYAQVRLRSGEVRRIHIECRATIGEVSNEEHNLRQYGKAGAIRWKGVRPTVRGVAMNPVDHPHGGGEGRTGEGQVPVSPWNTMTKGYRTRSNKRTQTFIVSRRKK.

Residues 224 to 274 are disordered; sequence AMNPVDHPHGGGEGRTGEGQVPVSPWNTMTKGYRTRSNKRTQTFIVSRRKK. The span at 229–239 shows a compositional bias: basic and acidic residues; that stretch reads DHPHGGGEGRT.

This sequence belongs to the universal ribosomal protein uL2 family. As to quaternary structure, part of the 50S ribosomal subunit. Forms a bridge to the 30S subunit in the 70S ribosome.

One of the primary rRNA binding proteins. Required for association of the 30S and 50S subunits to form the 70S ribosome, for tRNA binding and peptide bond formation. It has been suggested to have peptidyltransferase activity; this is somewhat controversial. Makes several contacts with the 16S rRNA in the 70S ribosome. The chain is Large ribosomal subunit protein uL2 from Methylibium petroleiphilum (strain ATCC BAA-1232 / LMG 22953 / PM1).